A 447-amino-acid polypeptide reads, in one-letter code: uncharacterized protein (447 aa).

Residues 392–435 (RFTKPSSSVAKSTSPSLRNSGSDESDLNQSDSDKEDERVVPVPK) are disordered. Residues 395 to 407 (KPSSSVAKSTSPS) show a composition bias toward low complexity. Polar residues predominate over residues 408-421 (LRNSGSDESDLNQS).

This is an uncharacterized protein from Invertebrate iridescent virus 3 (IIV-3).